The primary structure comprises 256 residues: Imidazole glycerol phosphate synthase subunit HisF (256 aa).

Active-site residues include Asp12 and Asp131.

This sequence belongs to the HisA/HisF family. As to quaternary structure, heterodimer of HisH and HisF.

It is found in the cytoplasm. The enzyme catalyses 5-[(5-phospho-1-deoxy-D-ribulos-1-ylimino)methylamino]-1-(5-phospho-beta-D-ribosyl)imidazole-4-carboxamide + L-glutamine = D-erythro-1-(imidazol-4-yl)glycerol 3-phosphate + 5-amino-1-(5-phospho-beta-D-ribosyl)imidazole-4-carboxamide + L-glutamate + H(+). It functions in the pathway amino-acid biosynthesis; L-histidine biosynthesis; L-histidine from 5-phospho-alpha-D-ribose 1-diphosphate: step 5/9. Functionally, IGPS catalyzes the conversion of PRFAR and glutamine to IGP, AICAR and glutamate. The HisF subunit catalyzes the cyclization activity that produces IGP and AICAR from PRFAR using the ammonia provided by the HisH subunit. In Bifidobacterium adolescentis (strain ATCC 15703 / DSM 20083 / NCTC 11814 / E194a), this protein is Imidazole glycerol phosphate synthase subunit HisF.